A 230-amino-acid polypeptide reads, in one-letter code: 2,3-bisphosphoglycerate-dependent phosphoglycerate mutase 1 (230 aa).

Residues 8–15 (RHGQSEWN), 21–22 (TG), Arg60, 87–90 (ERHY), Lys98, 114–115 (RR), and 183–184 (GN) contribute to the substrate site. The Tele-phosphohistidine intermediate role is filled by His9. Glu87 (proton donor/acceptor) is an active-site residue.

Belongs to the phosphoglycerate mutase family. BPG-dependent PGAM subfamily.

The enzyme catalyses (2R)-2-phosphoglycerate = (2R)-3-phosphoglycerate. The protein operates within carbohydrate degradation; glycolysis; pyruvate from D-glyceraldehyde 3-phosphate: step 3/5. Its function is as follows. Catalyzes the interconversion of 2-phosphoglycerate and 3-phosphoglycerate. The chain is 2,3-bisphosphoglycerate-dependent phosphoglycerate mutase 1 from Lactobacillus johnsonii (strain CNCM I-12250 / La1 / NCC 533).